Reading from the N-terminus, the 580-residue chain is TRAF-type zinc finger domain-containing protein 1 (580 aa).

A2 is modified (N-acetylalanine). The segment at 27-103 (IHEIHCQRNI…DLELSVLKLK (77 aa)) adopts a TRAF-type zinc-finger fold. Phosphoserine is present on S190. Over residues 197–209 (TTNQRSMTAQFPI) the composition is skewed to polar residues. The tract at residues 197–236 (TTNQRSMTAQFPIQNNLLEEQERQERNRSRQTPKERGEDS) is disordered. Over residues 216-235 (EQERQERNRSRQTPKERGED) the composition is skewed to basic and acidic residues. 3 positions are modified to phosphoserine: S326, S414, and S429. Residues 392–580 (PATANNHVSE…GAGDAEEEEE (189 aa)) form a disordered region. The segment covering 409–419 (QPRETSPELPK) has biased composition (basic and acidic residues). Positions 453 to 463 (PPNNTTAPPNR) are enriched in low complexity. At S469 the chain carries Phosphoserine.

In terms of assembly, interacts with MAVS, TICAM1, TRAF1, TRAF2, TRAF3 and TRAF6.

Functionally, negative feedback regulator that controls excessive innate immune responses. Regulates both Toll-like receptor 4 (TLR4) and DDX58/RIG1-like helicases (RLH) pathways. May inhibit the LTR pathway by direct interaction with TRAF6 and attenuation of NF-kappa-B activation. May negatively regulate the RLH pathway downstream from MAVS and upstream of NF-kappa-B and IRF3. This is TRAF-type zinc finger domain-containing protein 1 (TRAFD1) from Bos taurus (Bovine).